The chain runs to 64 residues: Translational regulator CsrA 1 (64 aa).

This sequence belongs to the CsrA/RsmA family. Homodimer; the beta-strands of each monomer intercalate to form a hydrophobic core, while the alpha-helices form wings that extend away from the core.

Its subcellular location is the cytoplasm. Its function is as follows. A key translational regulator that binds mRNA to regulate translation initiation and/or mRNA stability. Mediates global changes in gene expression, shifting from rapid growth to stress survival by linking envelope stress, the stringent response and the catabolite repression systems. Usually binds in the 5'-UTR; binding at or near the Shine-Dalgarno sequence prevents ribosome-binding, repressing translation, binding elsewhere in the 5'-UTR can activate translation and/or stabilize the mRNA. Its function is antagonized by small RNA(s). The sequence is that of Translational regulator CsrA 1 from Pseudomonas syringae pv. tomato (strain ATCC BAA-871 / DC3000).